Reading from the N-terminus, the 83-residue chain is Alpha-neurotoxin NTX-2 (83 aa).

An N-terminal signal peptide occupies residues 1 to 21 (MKTLLLTLLVVTIVCLDLGYT). Disulfide bonds link cysteine 24/cysteine 45, cysteine 38/cysteine 62, cysteine 64/cysteine 75, and cysteine 76/cysteine 81.

The protein belongs to the three-finger toxin family. Short-chain subfamily. Type I alpha-neurotoxin sub-subfamily. As to expression, expressed by the venom gland.

It localises to the secreted. In terms of biological role, binds to muscle nicotinic acetylcholine receptor (nAChR) and inhibit acetylcholine from binding to the receptor, thereby impairing neuromuscular transmission. The polypeptide is Alpha-neurotoxin NTX-2 (Naja sputatrix (Malayan spitting cobra)).